A 345-amino-acid chain; its full sequence is Phosphate acyltransferase (345 aa).

This sequence belongs to the PlsX family. As to quaternary structure, homodimer. Probably interacts with PlsY.

The protein localises to the cytoplasm. It catalyses the reaction a fatty acyl-[ACP] + phosphate = an acyl phosphate + holo-[ACP]. Its pathway is lipid metabolism; phospholipid metabolism. Functionally, catalyzes the reversible formation of acyl-phosphate (acyl-PO(4)) from acyl-[acyl-carrier-protein] (acyl-ACP). This enzyme utilizes acyl-ACP as fatty acyl donor, but not acyl-CoA. This chain is Phosphate acyltransferase, found in Limosilactobacillus fermentum (strain NBRC 3956 / LMG 18251) (Lactobacillus fermentum).